We begin with the raw amino-acid sequence, 68 residues long: Large ribosomal subunit protein uL29 (68 aa).

This sequence belongs to the universal ribosomal protein uL29 family.

This is Large ribosomal subunit protein uL29 from Streptococcus gordonii (strain Challis / ATCC 35105 / BCRC 15272 / CH1 / DL1 / V288).